A 474-amino-acid polypeptide reads, in one-letter code: F420-non-reducing hydrogenase vhc subunit A (474 aa).

Ni(2+)-binding residues include cysteine 61, cysteine 64, cysteine 445, and cysteine 448.

Belongs to the [NiFe]/[NiFeSe] hydrogenase large subunit family. In terms of assembly, the F420-non-reducing hydrogenase vhc is composed of three subunits; VhcA, VhcD and VhcG. Requires Ni(2+) as cofactor.

This is F420-non-reducing hydrogenase vhc subunit A (vhcA) from Methanococcus voltae.